Reading from the N-terminus, the 91-residue chain is Protein LURE 1.3 (91 aa).

An N-terminal signal peptide occupies residues 1 to 20 (MKLPFIFLITLLIFVSSCTS). An N-linked (GlcNAc...) asparagine glycan is attached at N24. 3 disulfides stabilise this stretch: C59-C76, C62-C83, and C66-C85. Residues 68-88 (RRGKYIRTCSFERKLCRCSIS) form a PRK6 binding region.

Belongs to the DEFL family. As to quaternary structure, binds to PRK6 LRRs. Expressed in the pistil. Detected exclusively in the synergid cells.

It is found in the secreted. In terms of biological role, pollen tube attractants guiding pollen tubes to the ovular micropyle. Attracts pollen tubes from both A.thaliana and A.lyrata. In Arabidopsis thaliana (Mouse-ear cress), this protein is Protein LURE 1.3.